Here is a 130-residue protein sequence, read N- to C-terminus: Histone H2A.6 (130 aa).

A compositionally biased stretch (gly residues) spans 1–12 (MAGRGKTLGSGG). The tract at residues 1-23 (MAGRGKTLGSGGAKKATSRSSKA) is disordered.

It belongs to the histone H2A family. The nucleosome is a histone octamer containing two molecules each of H2A, H2B, H3 and H4 assembled in one H3-H4 heterotetramer and two H2A-H2B heterodimers. The octamer wraps approximately 147 bp of DNA. Interacts with VIP1. Post-translationally, not ubiquitinated. Low level of expression, mainly in dividing tissues: floral buds, margins of newly emerging leaves, expanding leaves and the meristematic zone of root tips. Also expressed in many non-dividing cells of the elongation zone of the root.

Its subcellular location is the nucleus. It is found in the chromosome. Its function is as follows. Core component of nucleosome. Nucleosomes wrap and compact DNA into chromatin, limiting DNA accessibility to the cellular machineries which require DNA as a template. Histones thereby play a central role in transcription regulation, DNA repair, DNA replication and chromosomal stability. DNA accessibility is regulated via a complex set of post-translational modifications of histones, also called histone code, and nucleosome remodeling. Required for the T-DNA integration step of plant transformation by Agrobacterium. May play an important role in illegitimate recombination. The chain is Histone H2A.6 (RAT5) from Arabidopsis thaliana (Mouse-ear cress).